A 61-amino-acid chain; its full sequence is Large ribosomal subunit protein bL28 (61 aa).

It belongs to the bacterial ribosomal protein bL28 family.

The sequence is that of Large ribosomal subunit protein bL28 from Lacticaseibacillus paracasei (strain ATCC 334 / BCRC 17002 / CCUG 31169 / CIP 107868 / KCTC 3260 / NRRL B-441) (Lactobacillus paracasei).